Reading from the N-terminus, the 165-residue chain is ATP synthase subunit b (165 aa).

Residues 11–31 (LIFWTIVNFLLLVFLLGKFAW) form a helical membrane-spanning segment.

Belongs to the ATPase B chain family. As to quaternary structure, F-type ATPases have 2 components, F(1) - the catalytic core - and F(0) - the membrane proton channel. F(1) has five subunits: alpha(3), beta(3), gamma(1), delta(1), epsilon(1). F(0) has three main subunits: a(1), b(2) and c(10-14). The alpha and beta chains form an alternating ring which encloses part of the gamma chain. F(1) is attached to F(0) by a central stalk formed by the gamma and epsilon chains, while a peripheral stalk is formed by the delta and b chains.

It is found in the cell membrane. Its function is as follows. F(1)F(0) ATP synthase produces ATP from ADP in the presence of a proton or sodium gradient. F-type ATPases consist of two structural domains, F(1) containing the extramembraneous catalytic core and F(0) containing the membrane proton channel, linked together by a central stalk and a peripheral stalk. During catalysis, ATP synthesis in the catalytic domain of F(1) is coupled via a rotary mechanism of the central stalk subunits to proton translocation. In terms of biological role, component of the F(0) channel, it forms part of the peripheral stalk, linking F(1) to F(0). The protein is ATP synthase subunit b of Elusimicrobium minutum (strain Pei191).